Consider the following 572-residue polypeptide: Probable serine/threonine-protein kinase At1g54610 (572 aa).

The interval 1 to 89 is disordered; the sequence is MGCVFGREAA…SNPSKHWRGE (89 aa). Low complexity predominate over residues 9 to 40; sequence AATTTTAEAKQAKSSKASSGVVVVGESSVTKS. Basic and acidic residues predominate over residues 47–67; the sequence is DVEKKKNEEANGDKERKSSKG. Positions 74 to 83 are enriched in polar residues; that stretch reads KPNPRLSNPS. Positions 118–402 constitute a Protein kinase domain; that stretch reads FEKIDKIGQG…ASAALKSEFF (285 aa). Residues 124-132 and K147 each bind ATP; that span reads IGQGTYSNV. Residue D242 is the Proton acceptor of the active site. Disordered regions lie at residues 409–474 and 526–572; these read CEPA…NVDR and SSFN…AVVA. Residues 419-434 are compositionally biased toward basic and acidic residues; it reads PSKEIDAKRRDEETRR. Over residues 554–572 the composition is skewed to basic residues; sequence SRKKKDNTKSSKGKRAVVA.

Belongs to the protein kinase superfamily. Ser/Thr protein kinase family.

It carries out the reaction L-seryl-[protein] + ATP = O-phospho-L-seryl-[protein] + ADP + H(+). It catalyses the reaction L-threonyl-[protein] + ATP = O-phospho-L-threonyl-[protein] + ADP + H(+). The polypeptide is Probable serine/threonine-protein kinase At1g54610 (Arabidopsis thaliana (Mouse-ear cress)).